The chain runs to 515 residues: Fatty acyl-CoA reductase 1 (515 aa).

Topologically, residues 1-465 are cytoplasmic; that stretch reads MVSIPEYYEG…ARKHLNKLRN (465 aa). The tract at residues 451–507 is necessary and sufficient for PEX19-mediated localization into peroxisome membrane; that stretch reads SGLPAARKHLNKLRNIRYGFNTILVILIWRIFIARSQMARNIWYFVVSLCYKFLSYF. The chain crosses the membrane as a helical span at residues 466–483; that stretch reads IRYGFNTILVILIWRIFI. The Peroxisomal portion of the chain corresponds to 484–515; it reads ARSQMARNIWYFVVSLCYKFLSYFRASSTMRY.

Belongs to the fatty acyl-CoA reductase family. As to quaternary structure, interacts with PEX19; PEX19 mediates the targeting of FAR1 to peroxisomes. In terms of tissue distribution, widely expressed. Expressed in all tissues examined. Highest expression seen in preputial gland. Expressed in the brain where large quantities of ether lipids are synthesized.

It is found in the peroxisome membrane. The enzyme catalyses a long-chain fatty acyl-CoA + 2 NADPH + 2 H(+) = a long-chain primary fatty alcohol + 2 NADP(+) + CoA. It carries out the reaction hexadecanoyl-CoA + 2 NADPH + 2 H(+) = hexadecan-1-ol + 2 NADP(+) + CoA. It catalyses the reaction octadecanoyl-CoA + 2 NADPH + 2 H(+) = octadecan-1-ol + 2 NADP(+) + CoA. The catalysed reaction is (9Z)-octadecenoyl-CoA + 2 NADPH + 2 H(+) = (9Z)-octadecen-1-ol + 2 NADP(+) + CoA. The enzyme catalyses (9Z,12Z)-octadecadienoyl-CoA + 2 NADPH + 2 H(+) = (9Z,12Z)-octadecadien-1-ol + 2 NADP(+) + CoA. It carries out the reaction eicosanoyl-CoA + 2 NADPH + 2 H(+) = eicosan-1-ol + 2 NADP(+) + CoA. It catalyses the reaction 16-methylheptadecanoyl-CoA + 2 NADPH + 2 H(+) = 16-methylheptadecan-1-ol + 2 NADP(+) + CoA. The catalysed reaction is 18-methylnonadecanoyl-CoA + 2 NADPH + 2 H(+) = 18-methylnonadecan-1-ol + 2 NADP(+) + CoA. Its function is as follows. Catalyzes the reduction of saturated and unsaturated C16 or C18 fatty acyl-CoA to fatty alcohols. It plays an essential role in the production of ether lipids/plasmalogens which synthesis requires fatty alcohols. In parallel, it is also required for wax monoesters production since fatty alcohols also constitute a substrate for their synthesis. The polypeptide is Fatty acyl-CoA reductase 1 (Mus musculus (Mouse)).